We begin with the raw amino-acid sequence, 436 residues long: 3-ketoacyl-CoA thiolase (436 aa).

Cys99 (acyl-thioester intermediate) is an active-site residue. Active-site proton acceptor residues include His392 and Cys422.

The protein belongs to the thiolase-like superfamily. Thiolase family. Heterotetramer of two alpha chains (FadJ) and two beta chains (FadI).

Its subcellular location is the cytoplasm. The enzyme catalyses an acyl-CoA + acetyl-CoA = a 3-oxoacyl-CoA + CoA. The protein operates within lipid metabolism; fatty acid beta-oxidation. Catalyzes the final step of fatty acid oxidation in which acetyl-CoA is released and the CoA ester of a fatty acid two carbons shorter is formed. The chain is 3-ketoacyl-CoA thiolase from Escherichia fergusonii (strain ATCC 35469 / DSM 13698 / CCUG 18766 / IAM 14443 / JCM 21226 / LMG 7866 / NBRC 102419 / NCTC 12128 / CDC 0568-73).